We begin with the raw amino-acid sequence, 125 residues long: Protein ApaG (125 aa).

The ApaG domain maps to 1–125; the sequence is MIDAPRIIVQ…FRLAIPSLIN (125 aa).

This chain is Protein ApaG, found in Edwardsiella ictaluri (strain 93-146).